The chain runs to 207 residues: Ribosomal RNA small subunit methyltransferase G (207 aa).

S-adenosyl-L-methionine contacts are provided by residues Gly74, Phe79, 124–125, and Arg138; that span reads VE.

This sequence belongs to the methyltransferase superfamily. RNA methyltransferase RsmG family.

Its subcellular location is the cytoplasm. The catalysed reaction is guanosine(527) in 16S rRNA + S-adenosyl-L-methionine = N(7)-methylguanosine(527) in 16S rRNA + S-adenosyl-L-homocysteine. Specifically methylates the N7 position of guanine in position 527 of 16S rRNA. The polypeptide is Ribosomal RNA small subunit methyltransferase G (Hyphomonas neptunium (strain ATCC 15444)).